We begin with the raw amino-acid sequence, 360 residues long: Photosystem II protein D1 (360 aa).

3 consecutive transmembrane segments (helical) span residues 29-46 (YIGW…TATT), 118-133 (HFLL…EWEL), and 142-156 (WIAV…AATA). A chlorophyll a-binding site is contributed by His-118. A pheophytin a-binding site is contributed by Tyr-126. 2 residues coordinate [CaMn4O5] cluster: Asp-170 and Glu-189. Residues 197-218 (FHMMGVAGVFGGSLFSAMHGSL) form a helical membrane-spanning segment. Position 198 (His-198) interacts with chlorophyll a. A quinone contacts are provided by residues His-215 and 264–265 (SF). His-215 is a Fe cation binding site. His-272 serves as a coordination point for Fe cation. A helical transmembrane segment spans residues 274-288 (FLALWPVVGIWFTAL). Residues His-332, Glu-333, Asp-342, and Ala-344 each coordinate [CaMn4O5] cluster. The propeptide occupies 345–360 (SGEVMPVALTAPSINA).

Belongs to the reaction center PufL/M/PsbA/D family. PSII is composed of 1 copy each of membrane proteins PsbA, PsbB, PsbC, PsbD, PsbE, PsbF, PsbH, PsbI, PsbJ, PsbK, PsbL, PsbM, PsbT, PsbX, PsbY, PsbZ, Psb30/Ycf12, at least 3 peripheral proteins of the oxygen-evolving complex and a large number of cofactors. It forms dimeric complexes. The cofactor is The D1/D2 heterodimer binds P680, chlorophylls that are the primary electron donor of PSII, and subsequent electron acceptors. It shares a non-heme iron and each subunit binds pheophytin, quinone, additional chlorophylls, carotenoids and lipids. D1 provides most of the ligands for the Mn4-Ca-O5 cluster of the oxygen-evolving complex (OEC). There is also a Cl(-1) ion associated with D1 and D2, which is required for oxygen evolution. The PSII complex binds additional chlorophylls, carotenoids and specific lipids.. Tyr-161 forms a radical intermediate that is referred to as redox-active TyrZ, YZ or Y-Z. Post-translationally, C-terminally processed by CTPA; processing is essential to allow assembly of the oxygen-evolving complex and thus photosynthetic growth.

It localises to the plastid. The protein localises to the cyanelle thylakoid membrane. It carries out the reaction 2 a plastoquinone + 4 hnu + 2 H2O = 2 a plastoquinol + O2. Its function is as follows. Photosystem II (PSII) is a light-driven water:plastoquinone oxidoreductase that uses light energy to abstract electrons from H(2)O, generating O(2) and a proton gradient subsequently used for ATP formation. It consists of a core antenna complex that captures photons, and an electron transfer chain that converts photonic excitation into a charge separation. The D1/D2 (PsbA/PsbD) reaction center heterodimer binds P680, the primary electron donor of PSII as well as several subsequent electron acceptors. The sequence is that of Photosystem II protein D1 from Cyanophora paradoxa.